The primary structure comprises 335 residues: tRNA N6-adenosine threonylcarbamoyltransferase (335 aa).

The Fe cation site is built by His111 and His115. Substrate contacts are provided by residues 133 to 137 (LISGG), Asp166, Gly179, and Asn276. Asp301 is a Fe cation binding site.

The protein belongs to the KAE1 / TsaD family. It depends on Fe(2+) as a cofactor.

The protein resides in the cytoplasm. The catalysed reaction is L-threonylcarbamoyladenylate + adenosine(37) in tRNA = N(6)-L-threonylcarbamoyladenosine(37) in tRNA + AMP + H(+). In terms of biological role, required for the formation of a threonylcarbamoyl group on adenosine at position 37 (t(6)A37) in tRNAs that read codons beginning with adenine. Is involved in the transfer of the threonylcarbamoyl moiety of threonylcarbamoyl-AMP (TC-AMP) to the N6 group of A37, together with TsaE and TsaB. TsaD likely plays a direct catalytic role in this reaction. This chain is tRNA N6-adenosine threonylcarbamoyltransferase, found in Wolbachia sp. subsp. Brugia malayi (strain TRS).